The primary structure comprises 160 residues: Small ribosomal subunit protein uS19 (160 aa).

Belongs to the universal ribosomal protein uS19 family.

Functionally, protein S19 forms a complex with S13 that binds strongly to the 16S ribosomal RNA. This chain is Small ribosomal subunit protein uS19, found in Pyrobaculum islandicum (strain DSM 4184 / JCM 9189 / GEO3).